The chain runs to 232 residues: Ribose-5-phosphate isomerase A (232 aa).

Substrate contacts are provided by residues 31 to 34, 88 to 91, and 101 to 104; these read TGST, DGAD, and KGGG. E110 serves as the catalytic Proton acceptor. K128 is a binding site for substrate.

Belongs to the ribose 5-phosphate isomerase family. In terms of assembly, homodimer.

It catalyses the reaction aldehydo-D-ribose 5-phosphate = D-ribulose 5-phosphate. It participates in carbohydrate degradation; pentose phosphate pathway; D-ribose 5-phosphate from D-ribulose 5-phosphate (non-oxidative stage): step 1/1. Catalyzes the reversible conversion of ribose-5-phosphate to ribulose 5-phosphate. In Lactobacillus johnsonii (strain CNCM I-12250 / La1 / NCC 533), this protein is Ribose-5-phosphate isomerase A.